Here is a 595-residue protein sequence, read N- to C-terminus: Aspartate--tRNA(Asp/Asn) ligase (595 aa).

Glu-178 contacts L-aspartate. Residues 202–205 are aspartate; it reads QLFK. Residue Arg-224 participates in L-aspartate binding. ATP is bound by residues 224–226 and Gln-233; that span reads RDE. His-458 lines the L-aspartate pocket. Position 488 (Glu-488) interacts with ATP. Arg-495 serves as a coordination point for L-aspartate. 540 to 543 is an ATP binding site; it reads GLDR.

Belongs to the class-II aminoacyl-tRNA synthetase family. Type 1 subfamily. Homodimer.

The protein resides in the cytoplasm. It carries out the reaction tRNA(Asx) + L-aspartate + ATP = L-aspartyl-tRNA(Asx) + AMP + diphosphate. Aspartyl-tRNA synthetase with relaxed tRNA specificity since it is able to aspartylate not only its cognate tRNA(Asp) but also tRNA(Asn). Reaction proceeds in two steps: L-aspartate is first activated by ATP to form Asp-AMP and then transferred to the acceptor end of tRNA(Asp/Asn). This is Aspartate--tRNA(Asp/Asn) ligase from Trichodesmium erythraeum (strain IMS101).